The primary structure comprises 475 residues: Sulfate adenylyltransferase subunit 1 (475 aa).

In terms of domain architecture, tr-type G spans 25–241 (KSLLRFLTCG…LENIEIQRVV (217 aa)). Residues 34–41 (GSVDDGKS) are G1. 34-41 (GSVDDGKS) is a binding site for GTP. Residues 92–96 (GITID) are G2. A G3 region spans residues 113–116 (DTPG). Residues 113 to 117 (DTPGH) and 168 to 171 (NKMD) contribute to the GTP site. Residues 168–171 (NKMD) are G4. The interval 206–208 (SAL) is G5.

The protein belongs to the TRAFAC class translation factor GTPase superfamily. Classic translation factor GTPase family. CysN/NodQ subfamily. Heterodimer composed of CysD, the smaller subunit, and CysN.

The enzyme catalyses sulfate + ATP + H(+) = adenosine 5'-phosphosulfate + diphosphate. Its pathway is sulfur metabolism; hydrogen sulfide biosynthesis; sulfite from sulfate: step 1/3. With CysD forms the ATP sulfurylase (ATPS) that catalyzes the adenylation of sulfate producing adenosine 5'-phosphosulfate (APS) and diphosphate, the first enzymatic step in sulfur assimilation pathway. APS synthesis involves the formation of a high-energy phosphoric-sulfuric acid anhydride bond driven by GTP hydrolysis by CysN coupled to ATP hydrolysis by CysD. The chain is Sulfate adenylyltransferase subunit 1 from Cronobacter sakazakii (strain ATCC BAA-894) (Enterobacter sakazakii).